The sequence spans 382 residues: Cytoplasmic tRNA 2-thiolation protein 2 (382 aa).

It belongs to the CTU2/NCS2 family.

It localises to the cytoplasm. Its pathway is tRNA modification; 5-methoxycarbonylmethyl-2-thiouridine-tRNA biosynthesis. Its function is as follows. Plays a central role in 2-thiolation of mcm(5)S(2)U at tRNA wobble positions of tRNA(Lys), tRNA(Glu) and tRNA(Gln). May act by forming a heterodimer with NCS6 that ligates sulfur from thiocarboxylated URM1 onto the uridine of tRNAs at wobble position. Prior mcm(5) tRNA modification by the elongator complex is required for 2-thiolation. May also be involved in protein urmylation. The sequence is that of Cytoplasmic tRNA 2-thiolation protein 2 from Phaeosphaeria nodorum (strain SN15 / ATCC MYA-4574 / FGSC 10173) (Glume blotch fungus).